The chain runs to 203 residues: uncharacterized protein (203 aa).

3 helical membrane passes run 60–80 (IIDMILGAVTISLVIIVFFLY), 114–134 (WFQLKYLLLVSMTAFSFYFCT), and 157–177 (LQLGWICTTALLFYFYDALIL). 192-199 (GAMSEGKT) is an ATP binding site.

The protein localises to the membrane. This is an uncharacterized protein from Saccharomyces cerevisiae (strain ATCC 204508 / S288c) (Baker's yeast).